The chain runs to 161 residues: MENEPDTICILVDADACPVKAEIYRVAERHNLPVVIVANSFIAIPREAQRVERVVVSGNLDAADDWIAEHSRPGAVVVTADIPLASRALEKGASVIAPNGRIHTQSTIGNTLATRNLMDSLRSAGEVTGGPAPFAPKDRSAFLSALDLAIVRLKRAGFHAS.

Belongs to the UPF0178 family.

This chain is UPF0178 protein BOV_1904, found in Brucella ovis (strain ATCC 25840 / 63/290 / NCTC 10512).